The chain runs to 302 residues: Polyadenylate-binding protein 2 (302 aa).

Low complexity predominate over residues 1-12 (MAAAAAAAAAAG). A disordered region spans residues 1–111 (MAAAAAAAAA…EADPGDGAIE (111 aa)). Residue Ala-2 is modified to N-acetylalanine. Residues 2–141 (AAAAAAAAAA…LKELQNEVEK (140 aa)) are interaction with SKIP. Arg-17 is subject to Omega-N-methylarginine. Ser-19 carries the post-translational modification Phosphoserine. The span at 30–47 (GAGGEAGEGDPGGAGDYG) shows a compositional bias: gly residues. Over residues 51-68 (ESEELEPGELLPEPEPEE) the composition is skewed to acidic residues. Ser-52 is modified (phosphoserine). Residues 73–83 (PRAPPGAPGPG) are compositionally biased toward pro residues. Residue Ser-91 is modified to Phosphoserine. Positions 111–147 (EDPELEAIKARVREMEEEAEKLKELQNEVEKQMNMSP) form a coiled coil. Residues 115–143 (LEAIKARVREMEEEAEKLKELQNEVEKQM) form a stimulates PAPOLA region. Phosphoserine occurs at positions 146 and 231. Positions 168–245 (RSIYVGNVDY…RQIKVIPKRT (78 aa)) constitute an RRM domain. Asymmetric dimethylarginine; alternate occurs at positions 234, 255, and 259. 3 positions are modified to omega-N-methylarginine; alternate: Arg-234, Arg-255, and Arg-259. The interval 255–302 (RGFPRSRYRARTTNYNSSRSRFYSGFNSRPRGRIYRGRARATSWYSPY) is strong poly(A) affinity and self-association. Arg-261, Arg-263, Arg-265, Arg-273, Arg-275, Arg-283, Arg-285, Arg-287, Arg-290, Arg-292, and Arg-294 each carry asymmetric dimethylarginine. The interval 282–302 (SRPRGRIYRGRARATSWYSPY) is interaction with PAPOLA.

As to quaternary structure, monomer and homooligomer. Identified in a IGF2BP1-dependent mRNP granule complex containing untranslated mRNAs. Binds RNA as a monomer and oligomerizes when bound to poly(A). Interacts with PAPOLA, but only in presence of oligo(A) RNA. Interacts with NUDT21/CPSF5 and transportin. Associates in a ternary complex with CPSF4 and NS/NS1 and interaction with NS/NS1, blocks nuclear export of host cell mRNAs. Associates in a single complex with SKIP and MYOD1 and interacts with SKIP in differentiated myocytes. May interact with SETX. Interacts (via RRM domain and C-terminal arginine-rich region) with ZFP36 (via hypophosphorylated form); this interaction occurs in the nucleus in a RNA-independent manner, decreases in presence of single-stranded poly(A) RNA-oligomer and in a p38-dependent-manner and may down-regulated RNA poly(A) polymerase activity. Component of the poly(A) tail exosome targeting (PAXT) complex composed of PABPN1, ZFC3H1 and MTREX. Interacts with ZFC3H1 in a RNase-insensitive manner. Interacts with FRG1. Interacts with ZC3H11A. In terms of processing, arginine dimethylation is asymmetric and involves PRMT1 and PRMT3. It does not influence the RNA binding properties. Ubiquitous.

The protein localises to the cytoplasm. Its subcellular location is the nucleus. The protein resides in the nucleus speckle. Involved in the 3'-end formation of mRNA precursors (pre-mRNA) by the addition of a poly(A) tail of 200-250 nt to the upstream cleavage product. Stimulates poly(A) polymerase (PAPOLA) conferring processivity on the poly(A) tail elongation reaction and also controls the poly(A) tail length. Increases the affinity of poly(A) polymerase for RNA. Is also present at various stages of mRNA metabolism including nucleocytoplasmic trafficking and nonsense-mediated decay (NMD) of mRNA. Cooperates with SKIP to synergistically activate E-box-mediated transcription through MYOD1 and may regulate the expression of muscle-specific genes. Binds to poly(A) and to poly(G) with high affinity. May protect the poly(A) tail from degradation. Subunit of the trimeric poly(A) tail exosome targeting (PAXT) complex, a complex that directs a subset of long and polyadenylated poly(A) RNAs for exosomal degradation. The RNA exosome is fundamental for the degradation of RNA in eukaryotic nuclei. Substrate targeting is facilitated by its cofactor MTREX, which links to RNA-binding protein adapters. In Mus musculus (Mouse), this protein is Polyadenylate-binding protein 2 (Pabpn1).